We begin with the raw amino-acid sequence, 836 residues long: Lon protease (836 aa).

A Lon N-terminal domain is found at leucine 41–valine 233. Glycine 385–threonine 392 contributes to the ATP binding site. Residues valine 627–proline 811 form the Lon proteolytic domain. Residues serine 714 and lysine 757 contribute to the active site. The disordered stretch occupies residues alanine 816 to glutamate 836.

Belongs to the peptidase S16 family. In terms of assembly, homohexamer. Organized in a ring with a central cavity.

The protein resides in the cytoplasm. It carries out the reaction Hydrolysis of proteins in presence of ATP.. Its function is as follows. ATP-dependent serine protease that mediates the selective degradation of mutant and abnormal proteins as well as certain short-lived regulatory proteins. Required for cellular homeostasis and for survival from DNA damage and developmental changes induced by stress. Degrades polypeptides processively to yield small peptide fragments that are 5 to 10 amino acids long. Binds to DNA in a double-stranded, site-specific manner. The protein is Lon protease of Chloroherpeton thalassium (strain ATCC 35110 / GB-78).